The chain runs to 250 residues: Cyclopentanol dehydrogenase (250 aa).

Positions 18, 37, 63, 64, 90, 155, 159, 188, 190, and 193 each coordinate NAD(+). Tyrosine 155 serves as the catalytic Proton acceptor.

The protein belongs to the short-chain dehydrogenases/reductases (SDR) family.

The enzyme catalyses cyclopentanol + NAD(+) = cyclopentanone + NADH + H(+). It carries out the reaction cyclohexanol + NAD(+) = cyclohexanone + NADH + H(+). It participates in alcohol metabolism; cyclopentanol degradation; 5-valerolactone from cyclopentanol: step 1/2. In terms of biological role, catalyzes the oxidation of cyclopentanol to cyclopentanone and cyclohexanol to cyclohexanone. The activity toward cyclohexanol is 60% that of cyclopentanol. This Comamonas sp. (strain NCIMB 9872) protein is Cyclopentanol dehydrogenase.